We begin with the raw amino-acid sequence, 268 residues long: MPHGFDKLLHPEPEPQSPSPPPPPRRPSTQSRYHLHIRQQPIAARACGAGDRDRRPVDPPPIVQILLTDFDSNSQEDRDLLQDPRFTVGYRDGNRDREREREHERERERERETDGVARTDDNFSTPLLSGKAFMSPFYVDADPDPNSAPAHPSSISDPHISNPPHHVYNHAASRLHQPATFFIFADLSIRSAGLYRLQFRLMNWGSVEDTGQSMPILAQAWSDPFRVYPAKDFPGMRDSSILAEGLKELGFVELKTRGHGKGKGKKRR.

Over residues 1 to 13 the composition is skewed to basic and acidic residues; it reads MPHGFDKLLHPEP. 2 disordered regions span residues 1 to 124 and 142 to 165; these read MPHG…DNFS and DPDPNSAPAHPSSISDPHISNPPH. Positions 14–26 are enriched in pro residues; that stretch reads EPQSPSPPPPPRR. The Velvet domain occupies 28 to 257; that stretch reads STQSRYHLHI…ELGFVELKTR (230 aa). Over residues 92 to 121 the composition is skewed to basic and acidic residues; it reads DGNRDREREREHERERERERETDGVARTDD.

Belongs to the velvet family. VelC subfamily. Interacts with velA and vosA.

Its subcellular location is the nucleus. In terms of biological role, velvet-domain-containing protein that acts as a positive regulator of sexual development. This chain is Sexual development regulator velC, found in Penicillium rubens (strain ATCC 28089 / DSM 1075 / NRRL 1951 / Wisconsin 54-1255) (Penicillium chrysogenum).